A 166-amino-acid polypeptide reads, in one-letter code: RING-H2 finger protein ATL79 (166 aa).

The first 16 residues, 1 to 16 (MRLLVAEAASPLSSAA), serve as a signal peptide directing secretion. Residues 41–61 (SVLLILVISALICALSLYAAI) traverse the membrane as a helical segment. The tract at residues 71–90 (TEDDHKPDPEAAASSTPTTP) is disordered. Residues 81 to 90 (AAASSTPTTP) are compositionally biased toward low complexity. Residues 107–149 (CAICLSEFEQGESIQVLEKCQHGFHVKCIHKWLSTRSSCPTCR) form an RING-type; atypical zinc finger.

Belongs to the RING-type zinc finger family. ATL subfamily.

It localises to the membrane. It carries out the reaction S-ubiquitinyl-[E2 ubiquitin-conjugating enzyme]-L-cysteine + [acceptor protein]-L-lysine = [E2 ubiquitin-conjugating enzyme]-L-cysteine + N(6)-ubiquitinyl-[acceptor protein]-L-lysine.. It functions in the pathway protein modification; protein ubiquitination. This chain is RING-H2 finger protein ATL79 (ATL79), found in Arabidopsis thaliana (Mouse-ear cress).